A 483-amino-acid polypeptide reads, in one-letter code: Phloretin 2'-O-glucosyltransferase (483 aa).

Catalysis depends on His15, which acts as the Proton acceptor. His15 is a binding site for an anthocyanidin. Asp118 functions as the Charge relay in the catalytic mechanism. 8 residues coordinate UDP-alpha-D-glucose: Thr140, Ala360, Gln362, His377, Trp380, Asn381, Ser382, and Glu385. Ala400 is a binding site for an anthocyanidin. The UDP-alpha-D-glucose site is built by Glu401 and Gln402.

This sequence belongs to the UDP-glycosyltransferase family. In terms of tissue distribution, highly expressed in roots and at lower levels in leaves, flowers and fruits.

It catalyses the reaction phloretin + UDP-alpha-D-glucose = phlorizin + UDP + H(+). In terms of biological role, glycosyltransferase that possesses phloretin 2'-O-glycosyltransferase activity. Converts phloretin to phlorizin (phloretin 2'-O-glucoside), a potent antioxidant. Is specific for phloretin and does not possess glycosyltransferase activity toward caffeic acid, catechin, chlorogenic acid, 2-coumaric acid, 3-coumaric acid, 4-coumaric acid, cyanidin, 3,4-dihydroxyhydrocinnamic acid, epicatechin, 3-hydroxybenzoic acid, naringenin, 3,4-dihydroxybenzoic acid, quercetin and rutin. Can glycosylate phloretin in the presence of UDP-glucose, UDP-xylose and UDP-galactose. This is Phloretin 2'-O-glucosyltransferase from Malus domestica (Apple).